A 163-amino-acid polypeptide reads, in one-letter code: Neurotrophin-3 (163 aa).

A signal peptide spans 1–3 (IQS). A propeptide spanning residues 4-119 (TSMDQGILTE…VLNRTSRRKR (116 aa)) is cleaved from the precursor. An N-linked (GlcNAc...) asparagine glycan is attached at N112.

Belongs to the NGF-beta family.

It localises to the secreted. In terms of biological role, seems to promote the survival of visceral and proprioceptive sensory neurons. This Eryx colubrinus colubrinus protein is Neurotrophin-3 (NTF3).